The sequence spans 262 residues: Putative glutamine--fructose-6-phosphate aminotransferase [isomerizing] (262 aa).

Cys2 serves as the catalytic Nucleophile; for GATase activity. A Glutamine amidotransferase type-2 domain is found at 2–262 (CGIFGYCNFL…RKSPPFVHNT (261 aa)).

The enzyme catalyses D-fructose 6-phosphate + L-glutamine = D-glucosamine 6-phosphate + L-glutamate. The protein operates within nucleotide-sugar biosynthesis; UDP-N-acetyl-alpha-D-glucosamine biosynthesis; alpha-D-glucosamine 6-phosphate from D-fructose 6-phosphate: step 1/1. In terms of biological role, involved in amino sugar synthesis (formation of chitin, supplies the amino sugars of asparagine-linked oligosaccharides of glycoproteins). This Saccharomyces cerevisiae (strain ATCC 204508 / S288c) (Baker's yeast) protein is Putative glutamine--fructose-6-phosphate aminotransferase [isomerizing].